A 293-amino-acid chain; its full sequence is Heterogeneous nuclear ribonucleoprotein C-like 4 (293 aa).

Positions 16-87 (SRVFIGNLNT…QVVDINLAAE (72 aa)) constitute an RRM domain. 2 disordered regions span residues 140-177 (VVPS…KLKG) and 208-293 (HCKQ…QDDS). Residues 177–208 (GDDLQAIKQELTQIKQKVDSLLENLEKIEKEH) are a coiled coil. Composition is skewed to basic and acidic residues over residues 208-222 (HCKQ…KSEE) and 229-240 (SKKDKTHVKMES). The span at 242–263 (GGADDSVEEGDLLCDDDNEDQG) shows a compositional bias: acidic residues. Basic and acidic residues predominate over residues 269-293 (LIKDDEKGAEEGEDDRDRANGQDDS).

It belongs to the RRM HNRPC family. RALY subfamily.

The protein localises to the nucleus. The polypeptide is Heterogeneous nuclear ribonucleoprotein C-like 4 (Homo sapiens (Human)).